Consider the following 59-residue polypeptide: Large ribosomal subunit protein bL33 (59 aa).

Belongs to the bacterial ribosomal protein bL33 family.

This is Large ribosomal subunit protein bL33 from Borrelia recurrentis (strain A1).